The following is a 245-amino-acid chain: tRNA pseudouridine synthase A (245 aa).

Asp52 acts as the Nucleophile in catalysis. Substrate is bound at residue Tyr111.

It belongs to the tRNA pseudouridine synthase TruA family. As to quaternary structure, homodimer.

The catalysed reaction is uridine(38/39/40) in tRNA = pseudouridine(38/39/40) in tRNA. Its function is as follows. Formation of pseudouridine at positions 38, 39 and 40 in the anticodon stem and loop of transfer RNAs. The polypeptide is tRNA pseudouridine synthase A (Wolbachia sp. subsp. Drosophila simulans (strain wRi)).